A 76-amino-acid chain; its full sequence is Adipogenesis regulatory factor (76 aa).

In terms of tissue distribution, expressed in adipose tissue (at protein level). Highly expressed in omental and subcutaneous adipose tissues. Expressed in heart, cornea, liver, kidney and spleen.

Its subcellular location is the nucleus. Its function is as follows. Plays a role in fat cell development; promotes adipogenic differentiation and stimulates transcription initiation of master adipogenesis factors like PPARG and CEBPA at early stages of preadipocyte differentiation. Its overexpression confers resistance to the anticancer chemotherapeutic drug cisplatin. The chain is Adipogenesis regulatory factor (ADIRF) from Homo sapiens (Human).